A 191-amino-acid polypeptide reads, in one-letter code: Holliday junction branch migration complex subunit RuvA (191 aa).

The tract at residues 1-64 (MIRGVRGTLV…EDELALYGFA (64 aa)) is domain I. The domain II stretch occupies residues 65–136 (TEAELELFLS…ELRGRLPALT (72 aa)). The flexible linker stretch occupies residues 136 to 139 (TEVQ). The domain III stretch occupies residues 140–191 (AGEPIDQELVAALQALGYTAQEARQAATHPEVRRAPSLEERIVAALRQLAPP).

Belongs to the RuvA family. As to quaternary structure, homotetramer. Forms an RuvA(8)-RuvB(12)-Holliday junction (HJ) complex. HJ DNA is sandwiched between 2 RuvA tetramers; dsDNA enters through RuvA and exits via RuvB. An RuvB hexamer assembles on each DNA strand where it exits the tetramer. Each RuvB hexamer is contacted by two RuvA subunits (via domain III) on 2 adjacent RuvB subunits; this complex drives branch migration. In the full resolvosome a probable DNA-RuvA(4)-RuvB(12)-RuvC(2) complex forms which resolves the HJ.

The protein resides in the cytoplasm. The RuvA-RuvB-RuvC complex processes Holliday junction (HJ) DNA during genetic recombination and DNA repair, while the RuvA-RuvB complex plays an important role in the rescue of blocked DNA replication forks via replication fork reversal (RFR). RuvA specifically binds to HJ cruciform DNA, conferring on it an open structure. The RuvB hexamer acts as an ATP-dependent pump, pulling dsDNA into and through the RuvAB complex. HJ branch migration allows RuvC to scan DNA until it finds its consensus sequence, where it cleaves and resolves the cruciform DNA. The polypeptide is Holliday junction branch migration complex subunit RuvA (Thermomicrobium roseum (strain ATCC 27502 / DSM 5159 / P-2)).